A 364-amino-acid chain; its full sequence is Protein spindle-F (364 aa).

Residues 1-26 are disordered; that stretch reads MEASAAKITPMASSMSASGSTNSPSS. Over residues 9-26 the composition is skewed to low complexity; it reads TPMASSMSASGSTNSPSS. Residues 32–114 are a coiled coil; that stretch reads ALQVALQTIK…GMVSNENRRL (83 aa). Ser-53 is modified (phosphoserine). The interval 56–75 is disordered; it reads EENQQLREASSRSEGAPRAN. Phosphoserine occurs at positions 85, 172, and 202. Residues 210-243 are a coiled coil; that stretch reads AKRCLDGLQELRREAMKQQQELRSVMTLLENRIA. Phosphoserine is present on residues Ser-264 and Ser-270. The UBZ1-type zinc finger occupies 310-336; that stretch reads EKTCPMCGKQYSSQVSFNAFREHVEMH. Residues Cys-313 and Cys-316 each coordinate Zn(2+). Ser-325 bears the Phosphoserine mark. Zn(2+) is bound by residues His-332 and His-336. Ser-349 is modified (phosphoserine).

In terms of assembly, forms homooligomers. Interacts with the dynein light chain ctp. Interacts (via C-terminus) with IKKepsilon; this leads to phosphorylation of spn-F. Forms ternary complexes with ctp and IKKepsilon; this is required for spn-F redistribution from puncta in larval neurons and for dendrite pruning. Interacts with ctp and IKKepsilon through distinct regions. Interacts (via C-terminus) with jvl. Phosphorylated by IKKepsilon. Phosphorylation is required for spn-F neuronal distribution and dendrite pruning and reduces spn-F homooligomerization. It does not lead to spn-F degradation. In terms of tissue distribution, in pupal bristles, localizes to the bristle tip throughout the elongation period (at protein level).

It localises to the cytoplasm. It is found in the cytoskeleton. Its subcellular location is the cell projection. The protein localises to the axon. The protein resides in the dendrite. It localises to the perikaryon. Functionally, plays a role in oocyte axis determination and microtubule organization during oogenesis. Also required for polarized organization of the bristle. Required, with jvl, for activation of the kinase IKKepsilon in the germ line. Also required for localization of IKKepsilon to the distal tip of elongating bristles by acting as an adapter linking IKKepsilon and cytoplasmic dynein. Involved in dendrite pruning in larval sensory neurons during metamorphosis. The sequence is that of Protein spindle-F from Drosophila melanogaster (Fruit fly).